A 794-amino-acid chain; its full sequence is Signal transducer and activator of transcription 5A (794 aa).

The residue at position 90 (Tyr-90) is a Phosphotyrosine. 2 positions are modified to phosphoserine: Ser-128 and Ser-193. The SH2 domain occupies 589-686 (WNDGAILGFV…EVFSKYYTPV (98 aa)). The residue at position 682 (Tyr-682) is a Phosphotyrosine. Tyr-694 is subject to Phosphotyrosine; by JAK2. The disordered stretch occupies residues 773-794 (DSLDSRLSPPAGLFTSARGSLS). Ser-780 bears the Phosphoserine mark.

The protein belongs to the transcription factor STAT family. Forms a homodimer or a heterodimer with a related family member. Binds NR3C1. Interacts with NCOA1 and SOCS7. Interacts with ERBB4. Interacts with EBF4. Interacts with CD69. Post-translationally, tyrosine phosphorylated in response to KITLG/SCF, IL2, IL3, IL7, IL15, CSF2/GMCSF, GH1, PRL, EPO and THPO. Activated KIT promotes phosphorylation on tyrosine residues and subsequent translocation to the nucleus. Tyrosine phosphorylated in response to constitutively activated FGFR1, FGFR2, FGFR3 and FGFR4. Tyrosine phosphorylation is required for DNA-binding activity and dimerization. Serine phosphorylation is also required for maximal transcriptional activity. Tyrosine phosphorylated in response to signaling via activated FLT3; wild-type FLT3 results in much weaker phosphorylation than constitutively activated mutant FLT3. Alternatively, can be phosphorylated by JAK2 at Tyr-694. In terms of processing, ISGylated.

It is found in the cytoplasm. It localises to the nucleus. Functionally, carries out a dual function: signal transduction and activation of transcription. Mediates cellular responses to the cytokine KITLG/SCF and other growth factors. Mediates cellular responses to ERBB4. May mediate cellular responses to activated FGFR1, FGFR2, FGFR3 and FGFR4. Binds to the GAS element and activates PRL-induced transcription. Regulates the expression of milk proteins during lactation. This is Signal transducer and activator of transcription 5A (STAT5A) from Homo sapiens (Human).